The sequence spans 97 residues: uncharacterized protein (97 aa).

The signal sequence occupies residues 1–21; the sequence is MNKKFSISLLSTILAFLLVLG. C22 is lipidated: N-palmitoyl cysteine. C22 carries S-diacylglycerol cysteine lipidation.

The protein to B.burgdorferi BBD15.

It is found in the cell membrane. This is an uncharacterized protein from Borreliella burgdorferi (strain ATCC 35210 / DSM 4680 / CIP 102532 / B31) (Borrelia burgdorferi).